The sequence spans 364 residues: DNA replication and repair protein RecF (364 aa).

Glycine 30 to threonine 37 lines the ATP pocket.

This sequence belongs to the RecF family.

The protein resides in the cytoplasm. The RecF protein is involved in DNA metabolism; it is required for DNA replication and normal SOS inducibility. RecF binds preferentially to single-stranded, linear DNA. It also seems to bind ATP. The polypeptide is DNA replication and repair protein RecF (Clostridium botulinum (strain ATCC 19397 / Type A)).